The following is a 391-amino-acid chain: MPGNSFGKLFRVTTFGESHGPAVGVVIDGVPAGLPLTVEDIKFELEFRRPGRLYVSGRREKDEPEILSGIFNNRTTGSPIAVIVRNTDVVSSFYEEIRYKPRPGHADLPFIMKYGYENWDYRGGGRASARETVGRVIAGAVAKKLLMLADTWIAGHLRSLGPEELNEEVTFEEVLCSKYSPVRASKKVLEEKYEALIKKATQEGDSYGGIAEVITKNPPIGLGEPVFDKMKAELAKAIMSIPAVTGFEYGLGFMVSKMKGSEANDEIIRKDNKIGWKYNYAGGILGGLTNGEDLIVRCAFKPTSSIRKPQKTIDLRNLEETYISVIGRHDPAVAIRGVTVVESMVALTLVDHAMRAGVIPLVKLTEEQGNIVQQRWERYVRSCKPMEESQL.

Arginine 48 is a binding site for NADP(+). Residues 126–128 (RAS), glycine 286, 301–305 (KPTSS), and arginine 328 contribute to the FMN site.

This sequence belongs to the chorismate synthase family. It depends on FMNH2 as a cofactor.

The enzyme catalyses 5-O-(1-carboxyvinyl)-3-phosphoshikimate = chorismate + phosphate. It participates in metabolic intermediate biosynthesis; chorismate biosynthesis; chorismate from D-erythrose 4-phosphate and phosphoenolpyruvate: step 7/7. Its function is as follows. Catalyzes the anti-1,4-elimination of the C-3 phosphate and the C-6 proR hydrogen from 5-enolpyruvylshikimate-3-phosphate (EPSP) to yield chorismate, which is the branch point compound that serves as the starting substrate for the three terminal pathways of aromatic amino acid biosynthesis. This reaction introduces a second double bond into the aromatic ring system. The chain is Chorismate synthase from Saccharolobus islandicus (strain M.16.27) (Sulfolobus islandicus).